A 262-amino-acid polypeptide reads, in one-letter code: Shikimate dehydrogenase (NADP(+)) (262 aa).

Residues 15–17 and threonine 62 each bind shikimate; that span reads SRS. Lysine 66 (proton acceptor) is an active-site residue. NADP(+) is bound at residue glutamate 78. 2 residues coordinate shikimate: asparagine 87 and aspartate 102. NADP(+) is bound by residues 126–130, 150–155, and methionine 214; these read GAGGA and NRTLAR. Tyrosine 216 serves as a coordination point for shikimate. Glycine 236 lines the NADP(+) pocket.

Belongs to the shikimate dehydrogenase family. Homodimer.

The catalysed reaction is shikimate + NADP(+) = 3-dehydroshikimate + NADPH + H(+). Its pathway is metabolic intermediate biosynthesis; chorismate biosynthesis; chorismate from D-erythrose 4-phosphate and phosphoenolpyruvate: step 4/7. Functionally, involved in the biosynthesis of the chorismate, which leads to the biosynthesis of aromatic amino acids. Catalyzes the reversible NADPH linked reduction of 3-dehydroshikimate (DHSA) to yield shikimate (SA). This chain is Shikimate dehydrogenase (NADP(+)), found in Acinetobacter baumannii (strain ACICU).